The sequence spans 397 residues: CCA-adding enzyme (397 aa).

Residues G26 and R29 each coordinate ATP. 2 residues coordinate CTP: G26 and R29. 2 residues coordinate Mg(2+): D39 and D41. Residues R110, D153, R156, R159, and R162 each contribute to the ATP site. CTP is bound by residues R110, D153, R156, R159, and R162.

Belongs to the tRNA nucleotidyltransferase/poly(A) polymerase family. Bacterial CCA-adding enzyme type 3 subfamily. Homodimer. Mg(2+) is required as a cofactor.

It catalyses the reaction a tRNA precursor + 2 CTP + ATP = a tRNA with a 3' CCA end + 3 diphosphate. The catalysed reaction is a tRNA with a 3' CCA end + 2 CTP + ATP = a tRNA with a 3' CCACCA end + 3 diphosphate. Functionally, catalyzes the addition and repair of the essential 3'-terminal CCA sequence in tRNAs without using a nucleic acid template. Adds these three nucleotides in the order of C, C, and A to the tRNA nucleotide-73, using CTP and ATP as substrates and producing inorganic pyrophosphate. tRNA 3'-terminal CCA addition is required both for tRNA processing and repair. Also involved in tRNA surveillance by mediating tandem CCA addition to generate a CCACCA at the 3' terminus of unstable tRNAs. While stable tRNAs receive only 3'-terminal CCA, unstable tRNAs are marked with CCACCA and rapidly degraded. This chain is CCA-adding enzyme, found in Bacillus thuringiensis subsp. konkukian (strain 97-27).